The primary structure comprises 95 residues: uncharacterized protein (95 aa).

The chain crosses the membrane as a helical span at residues 12-32 (IASLVVSVVVLLIGLILWFFI).

It is found in the cell membrane. This is an uncharacterized protein from Escherichia coli O6:H1 (strain CFT073 / ATCC 700928 / UPEC).